The primary structure comprises 315 residues: GTP cyclohydrolase MptA (315 aa).

This sequence belongs to the GTP cyclohydrolase IV family. Homodimer. It depends on Fe(2+) as a cofactor.

It carries out the reaction GTP + H2O = 7,8-dihydroneopterin 2',3'-cyclic phosphate + formate + diphosphate + H(+). The protein operates within cofactor biosynthesis; 5,6,7,8-tetrahydromethanopterin biosynthesis. Converts GTP to 7,8-dihydro-D-neopterin 2',3'-cyclic phosphate, the first intermediate in the biosynthesis of coenzyme methanopterin. The protein is GTP cyclohydrolase MptA of Methanococcus maripaludis (strain DSM 14266 / JCM 13030 / NBRC 101832 / S2 / LL).